A 1942-amino-acid polypeptide reads, in one-letter code: Probable helicase with zinc finger domain (1942 aa).

A C3H1-type zinc finger spans residues 178-206 (SEEYTLCKRFLEQGICRYGAQCTSAHSQE). Serine 248 is subject to Phosphoserine. 668–675 (GPYGTGKT) lines the ATP pocket. Positions 794–797 (DEAA) match the DEAA box motif. The segment covering 1117-1127 (SGSTNKQQQSP) has biased composition (polar residues). The tract at residues 1117–1141 (SGSTNKQQQSPPKGKSLHHTQNDHF) is disordered. Threonine 1163 bears the Phosphothreonine mark. Arginine 1245 bears the Omega-N-methylarginine mark. Disordered regions lie at residues 1246 to 1345 (GSPI…INLP), 1386 to 1429 (NLPE…GPNN), 1527 to 1552 (QGSAPYPHHHHPHLQHLPQPPLGLHQ), and 1608 to 1637 (RQVQSRSPPAVPSPPSSTDHSSHFSNFNDN). Composition is skewed to basic and acidic residues over residues 1268-1281 (HQEKDQHEQNRNGK) and 1292-1308 (NKIRTPEKKPTEPKQVD). Residues 1399 to 1412 (NQVVQQQSQLNQQP) are compositionally biased toward low complexity. Residue serine 1614 is modified to Phosphoserine. Residues 1623–1636 (SSTDHSSHFSNFND) show a composition bias toward low complexity. 4 positions are modified to phosphoserine: serine 1645, serine 1738, serine 1741, and serine 1766. Disordered stretches follow at residues 1729–1779 (FHPL…TPQD), 1792–1843 (NQSS…PEDQ), and 1870–1942 (MPNK…SYFK). Low complexity predominate over residues 1731 to 1745 (PLSSRTVSSSSLPSL). Polar residues-rich tracts occupy residues 1761-1779 (RISSSSVQPCSEEVSTPQD) and 1792-1825 (NQSSFNFSSPESWVNTTSSTPYQNIPCNGSSRTA). Low complexity-rich tracts occupy residues 1876-1888 (AESANSSSPQSSA) and 1920-1942 (LSLFQELSLGSSSGSNGFYSYFK).

It belongs to the DNA2/NAM7 helicase family. In terms of assembly, interacts with SMYD2. Interacts with POLR2A. Interacts with SMYD3; the interaction may bridge SMYD3 and RNA polymerase II. In terms of tissue distribution, expressed predominantly in thymus and brain. Expression is down-regulated in 28 of 95 tested cancer cell lines.

It is found in the nucleus. Functionally, may act as a helicase that plays a role in RNA metabolism in multiple tissues and organs within the developing embryo. The protein is Probable helicase with zinc finger domain (HELZ) of Homo sapiens (Human).